The sequence spans 166 residues: Small ribosomal subunit protein uS4 (166 aa).

Residues 103-165 (RRLQTVVYKK…PTSPYFKKAQ (63 aa)) form the S4 RNA-binding domain.

The protein belongs to the universal ribosomal protein uS4 family. In terms of assembly, part of the 30S ribosomal subunit. Contacts protein S5. The interaction surface between S4 and S5 is involved in control of translational fidelity.

One of the primary rRNA binding proteins, it binds directly to 16S rRNA where it nucleates assembly of the body of the 30S subunit. In terms of biological role, with S5 and S12 plays an important role in translational accuracy. The polypeptide is Small ribosomal subunit protein uS4 (Ignicoccus hospitalis (strain KIN4/I / DSM 18386 / JCM 14125)).